A 729-amino-acid polypeptide reads, in one-letter code: DNA topoisomerase 3 (729 aa).

Residues 3 to 136 (KSVVIAEKPS…IKRLWISSVT (134 aa)) enclose the Toprim domain. The Mg(2+) site is built by Glu9 and Asp105. Residues 153-594 (YDNLYASAVA…EMKNYTKEIV (442 aa)) enclose the Topo IA-type catalytic domain. Residues 187-192 (NCGRVQ) form an interaction with DNA region. Residue Tyr310 is the O-(5'-phospho-DNA)-tyrosine intermediate of the active site. The segment covering 686–713 (ERRKKESGNKADKRDVQKYMKQQKKEEE) has biased composition (basic and acidic residues). The interval 686 to 718 (ERRKKESGNKADKRDVQKYMKQQKKEEEPLNNP) is disordered.

It belongs to the type IA topoisomerase family. The cofactor is Mg(2+).

The catalysed reaction is ATP-independent breakage of single-stranded DNA, followed by passage and rejoining.. In terms of biological role, releases the supercoiling and torsional tension of DNA, which is introduced during the DNA replication and transcription, by transiently cleaving and rejoining one strand of the DNA duplex. Introduces a single-strand break via transesterification at a target site in duplex DNA. The scissile phosphodiester is attacked by the catalytic tyrosine of the enzyme, resulting in the formation of a DNA-(5'-phosphotyrosyl)-enzyme intermediate and the expulsion of a 3'-OH DNA strand. The free DNA strand then undergoes passage around the unbroken strand, thus removing DNA supercoils. Finally, in the religation step, the DNA 3'-OH attacks the covalent intermediate to expel the active-site tyrosine and restore the DNA phosphodiester backbone. The chain is DNA topoisomerase 3 from Bacillus cereus (strain ZK / E33L).